A 699-amino-acid polypeptide reads, in one-letter code: SPX domain-containing membrane protein At4g22990 (699 aa).

The region spanning 2–145 (VAFGKKLKER…GYRFTNYYVK (144 aa)) is the SPX domain. Transmembrane regions (helical) follow at residues 249–269 (FMSL…TYII), 280–300 (LGAA…AQLF), 317–337 (LIFS…AFDF), 339–358 (SIAV…ARAV), 377–397 (AGFV…AGLL), and 413–433 (LPGW…AISF). Residues 475-490 (IEEQGEDECDGSEEAS) show a composition bias toward acidic residues. Residues 475 to 494 (IEEQGEDECDGSEEASEDSR) form a disordered region. 5 helical membrane-spanning segments follow: residues 515-535 (LLIY…SSVI), 546-566 (SVAI…LVVG), 578-598 (ILLV…HVVV), 606-626 (VCSG…NLSL), and 671-691 (MLLN…IVAT).

Belongs to the major facilitator superfamily.

The protein localises to the membrane. This chain is SPX domain-containing membrane protein At4g22990, found in Arabidopsis thaliana (Mouse-ear cress).